Consider the following 155-residue polypeptide: uncharacterized protein (155 aa).

One can recognise an HTH asnC-type domain in the interval 4 to 65 (IDEIDEVIVR…VVDPSFFGEF (62 aa)). A DNA-binding region (H-T-H motif) is located at residues 23 to 42 (LTELGRKVGLTASAVKNRIE).

This is an uncharacterized protein from Pyrococcus horikoshii (strain ATCC 700860 / DSM 12428 / JCM 9974 / NBRC 100139 / OT-3).